The primary structure comprises 284 residues: UPF0276 protein PA14_21580 (284 aa).

Belongs to the UPF0276 family.

The chain is UPF0276 protein PA14_21580 from Pseudomonas aeruginosa (strain UCBPP-PA14).